We begin with the raw amino-acid sequence, 349 residues long: Holliday junction branch migration complex subunit RuvB (349 aa).

The tract at residues 1–183 (MTDPSRLVTP…FGIPIRLNFY (183 aa)) is large ATPase domain (RuvB-L). ATP-binding positions include L22, R23, G64, K67, T68, T69, 130 to 132 (EDF), R173, Y183, and R220. Position 68 (T68) interacts with Mg(2+). The segment at 184–254 (TIEELESIVT…IADHALGALE (71 aa)) is small ATPAse domain (RuvB-S). Positions 257 to 349 (SAGLDAMDRR…GLFGDTGDQE (93 aa)) are head domain (RuvB-H). R293, R312, and R317 together coordinate DNA.

This sequence belongs to the RuvB family. As to quaternary structure, homohexamer. Forms an RuvA(8)-RuvB(12)-Holliday junction (HJ) complex. HJ DNA is sandwiched between 2 RuvA tetramers; dsDNA enters through RuvA and exits via RuvB. An RuvB hexamer assembles on each DNA strand where it exits the tetramer. Each RuvB hexamer is contacted by two RuvA subunits (via domain III) on 2 adjacent RuvB subunits; this complex drives branch migration. In the full resolvosome a probable DNA-RuvA(4)-RuvB(12)-RuvC(2) complex forms which resolves the HJ.

It is found in the cytoplasm. It carries out the reaction ATP + H2O = ADP + phosphate + H(+). Functionally, the RuvA-RuvB-RuvC complex processes Holliday junction (HJ) DNA during genetic recombination and DNA repair, while the RuvA-RuvB complex plays an important role in the rescue of blocked DNA replication forks via replication fork reversal (RFR). RuvA specifically binds to HJ cruciform DNA, conferring on it an open structure. The RuvB hexamer acts as an ATP-dependent pump, pulling dsDNA into and through the RuvAB complex. RuvB forms 2 homohexamers on either side of HJ DNA bound by 1 or 2 RuvA tetramers; 4 subunits per hexamer contact DNA at a time. Coordinated motions by a converter formed by DNA-disengaged RuvB subunits stimulates ATP hydrolysis and nucleotide exchange. Immobilization of the converter enables RuvB to convert the ATP-contained energy into a lever motion, pulling 2 nucleotides of DNA out of the RuvA tetramer per ATP hydrolyzed, thus driving DNA branch migration. The RuvB motors rotate together with the DNA substrate, which together with the progressing nucleotide cycle form the mechanistic basis for DNA recombination by continuous HJ branch migration. Branch migration allows RuvC to scan DNA until it finds its consensus sequence, where it cleaves and resolves cruciform DNA. The polypeptide is Holliday junction branch migration complex subunit RuvB (Rhodopseudomonas palustris (strain ATCC BAA-98 / CGA009)).